Consider the following 272-residue polypeptide: FAS1 domain-containing protein YDR262W (272 aa).

A signal peptide spans 1-26 (MIFNLPVSVLLYFSLIWAMEPSFVRG). One can recognise an FAS1 domain in the interval 100-269 (PLSLESKLSL…GVILMVDFTL (170 aa)).

It localises to the vacuole. This chain is FAS1 domain-containing protein YDR262W, found in Saccharomyces cerevisiae (strain ATCC 204508 / S288c) (Baker's yeast).